The primary structure comprises 335 residues: Phosphate acyltransferase (335 aa).

This sequence belongs to the PlsX family. In terms of assembly, homodimer. Probably interacts with PlsY.

Its subcellular location is the cytoplasm. The enzyme catalyses a fatty acyl-[ACP] + phosphate = an acyl phosphate + holo-[ACP]. It functions in the pathway lipid metabolism; phospholipid metabolism. In terms of biological role, catalyzes the reversible formation of acyl-phosphate (acyl-PO(4)) from acyl-[acyl-carrier-protein] (acyl-ACP). This enzyme utilizes acyl-ACP as fatty acyl donor, but not acyl-CoA. The sequence is that of Phosphate acyltransferase from Leptospira interrogans serogroup Icterohaemorrhagiae serovar copenhageni (strain Fiocruz L1-130).